Consider the following 426-residue polypeptide: D-tagatose-1,6-bisphosphate aldolase subunit KbaZ (426 aa).

This sequence belongs to the GatZ/KbaZ family. KbaZ subfamily. In terms of assembly, forms a complex with KbaY.

Its pathway is carbohydrate metabolism; D-tagatose 6-phosphate degradation; D-glyceraldehyde 3-phosphate and glycerone phosphate from D-tagatose 6-phosphate: step 2/2. In terms of biological role, component of the tagatose-1,6-bisphosphate aldolase KbaYZ that is required for full activity and stability of the Y subunit. Could have a chaperone-like function for the proper and stable folding of KbaY. When expressed alone, KbaZ does not show any aldolase activity. The protein is D-tagatose-1,6-bisphosphate aldolase subunit KbaZ of Escherichia coli O17:K52:H18 (strain UMN026 / ExPEC).